The following is a 433-amino-acid chain: GTPase Obg (433 aa).

Residues 1–158 form the Obg domain; the sequence is MFVDQVKIYV…RNVILELKLL (158 aa). The OBG-type G domain occupies 159–329; that stretch reads ADVGLVGFPS…LLFAIADLLE (171 aa). GTP is bound by residues 165 to 172, 190 to 194, 212 to 215, 282 to 285, and 310 to 312; these read GFPSVGKS, FTTLV, DLPG, NKMD, and SAA. S172 and T192 together coordinate Mg(2+). The 79-residue stretch at 350-428 folds into the OCT domain; sequence KYEKEELPFT…LLDYEFEFVD (79 aa).

The protein belongs to the TRAFAC class OBG-HflX-like GTPase superfamily. OBG GTPase family. As to quaternary structure, monomer. Requires Mg(2+) as cofactor.

The protein localises to the cytoplasm. In terms of biological role, an essential GTPase which binds GTP, GDP and possibly (p)ppGpp with moderate affinity, with high nucleotide exchange rates and a fairly low GTP hydrolysis rate. Plays a role in control of the cell cycle, stress response, ribosome biogenesis and in those bacteria that undergo differentiation, in morphogenesis control. The sequence is that of GTPase Obg from Geobacillus thermodenitrificans (strain NG80-2).